The primary structure comprises 319 residues: MVVHLISLLTQTLALIILSLPSIINTSQLDYDTLVFKQCDPLDANILQKATTKSPNYSNQNLFLRAQALSSFLRKLESESSRSKFLKTLVGNEKHAVSGWFQCREDYPSEICHKCVGDLREISSRSCGNATSARIHLRGCHLIYKFERIDTPGAQVNNHHKYKLFETPEHGLIHKICDGATAETFPGFEEMRTEALTAAETGVVDGHGFYEDSYKLLHVVAQCDGHVEACDCGECISSAAAAAAEECRWSIAGQIYLEGCHVGYTYHPHELPNDSYHEEGSKVNTGKSLAIVVGGVAALVFVAIFFMFLKSLRKKGDDC.

Positions 1 to 26 (MVVHLISLLTQTLALIILSLPSIINT) are cleaved as a signal peptide. The Extracellular segment spans residues 27-288 (SQLDYDTLVF…EGSKVNTGKS (262 aa)). Disulfide bonds link C39–C127, C103–C112, C115–C140, C177–C247, C223–C232, and C235–C260. Gnk2-homologous domains are found at residues 45–149 (NILQ…FERI) and 170–269 (HGLI…YHPH). Residues 289 to 309 (LAIVVGGVAALVFVAIFFMFL) traverse the membrane as a helical segment. The interval 289-309 (LAIVVGGVAALVFVAIFFMFL) is necessary and sufficient for plasmodesmal targeting. At 310–319 (KSLRKKGDDC) the chain is on the cytoplasmic side.

The protein belongs to the cysteine-rich repeat secretory protein family. Plasmodesmata-located proteins (PDLD) subfamily. (Microbial infection) Interacts with Grapevine fanleaf virus (GFLV) 2B-MP. Highly expressed in seeds and roots.

Its subcellular location is the cell membrane. The protein resides in the cell junction. It is found in the plasmodesma. Functionally, modulates cell-to-cell trafficking. This Arabidopsis thaliana (Mouse-ear cress) protein is Plasmodesmata-located protein 4.